The sequence spans 230 residues: uncharacterized protein (230 aa).

The chain crosses the membrane as a helical span at residues 17–37; the sequence is AGALSLGIGFFALASALWFLI. Asparagine 126 carries N-linked (GlcNAc...) asparagine glycosylation.

The protein resides in the membrane. This is an uncharacterized protein from Mus musculus (Mouse).